The following is a 240-amino-acid chain: Peptidyl-tRNA hydrolase (240 aa).

Tyr14 contacts tRNA. His19 acts as the Proton acceptor in catalysis. Positions 64, 66, and 112 each coordinate tRNA. Residues 190–204 (KADEEKPRKDSEKKP) show a composition bias toward basic and acidic residues. A disordered region spans residues 190–240 (KADEEKPRKDSEKKPAGQSHIRQARNNNQPKLPATGPMADMLKKMFGNKGE). Residues 209-219 (HIRQARNNNQP) are compositionally biased toward polar residues.

Belongs to the PTH family. As to quaternary structure, monomer.

Its subcellular location is the cytoplasm. The enzyme catalyses an N-acyl-L-alpha-aminoacyl-tRNA + H2O = an N-acyl-L-amino acid + a tRNA + H(+). Its function is as follows. Hydrolyzes ribosome-free peptidyl-tRNAs (with 1 or more amino acids incorporated), which drop off the ribosome during protein synthesis, or as a result of ribosome stalling. Functionally, catalyzes the release of premature peptidyl moieties from peptidyl-tRNA molecules trapped in stalled 50S ribosomal subunits, and thus maintains levels of free tRNAs and 50S ribosomes. This chain is Peptidyl-tRNA hydrolase, found in Rhizobium etli (strain ATCC 51251 / DSM 11541 / JCM 21823 / NBRC 15573 / CFN 42).